We begin with the raw amino-acid sequence, 1746 residues long: tRNA (32-2'-O)-methyltransferase regulator THADA (1746 aa).

Residues 1252–1286 (EQALAEIRRIVVELKALQLRLKNTEAANTKLNTNV) adopt a coiled-coil conformation.

This sequence belongs to the THADA family. In terms of assembly, interacts with SERCA. As to expression, detected in the larval fat body, salivary glands and wing imaginal disks (at protein level).

It localises to the endoplasmic reticulum. Its function is as follows. Together with methyltransferase Trm7-32, methylates the 2'-O-ribose of nucleotides at position 32 of the anticodon loop of substrate tRNAs. Plays a key role in energy homeostasis by regulating the balance between energy storage and heat production. Functions by negatively regulating Ca(2+) signaling pathways that are involved in heat production and maintaining correct lipid storage in the fat body. Regulates Ca(2+) signaling pathways by reducing the activity of the calcium-transporting ATPase SERCA possibly by promoting uncoupling of SERCA ATP hydrolysis from calcium pumping. May also function in the nervous system to control feeding behavior. In Drosophila melanogaster (Fruit fly), this protein is tRNA (32-2'-O)-methyltransferase regulator THADA.